The following is a 395-amino-acid chain: Terminal nucleotidyltransferase 5B (395 aa).

It belongs to the TENT family.

The protein resides in the cytoplasm. It is found in the nucleus. The catalysed reaction is RNA(n) + ATP = RNA(n)-3'-adenine ribonucleotide + diphosphate. Functionally, catalyzes the transfer of one adenosine molecule from an ATP to an mRNA poly(A) tail bearing a 3'-OH terminal group in an ATP hydrolysis-dependent manner and participates in cytoplasmic polyadenylation. May be involved in maintaining the translation efficiency of at least some genes through preventing degradation of their mRNAs. This Xenopus tropicalis (Western clawed frog) protein is Terminal nucleotidyltransferase 5B.